A 265-amino-acid polypeptide reads, in one-letter code: Oxygen-evolving enhancer protein 2-2, chloroplastic (265 aa).

Residues 1-79 constitute a chloroplast transit peptide; it reads MASTQCFLHH…VGSKVSPADA (79 aa).

Belongs to the PsbP family.

It localises to the plastid. The protein resides in the chloroplast thylakoid membrane. In terms of biological role, may be involved in the regulation of photosystem II. The chain is Oxygen-evolving enhancer protein 2-2, chloroplastic (PSBP2) from Nicotiana tabacum (Common tobacco).